Reading from the N-terminus, the 623-residue chain is 1-deoxy-D-xylulose-5-phosphate synthase (623 aa).

Residues His80 and 121-123 each bind thiamine diphosphate; that span reads GHS. Asp152 contacts Mg(2+). Residues 153–154, Asn181, Tyr289, and Glu372 each bind thiamine diphosphate; that span reads GA. Asn181 contributes to the Mg(2+) binding site.

This sequence belongs to the transketolase family. DXPS subfamily. In terms of assembly, homodimer. The cofactor is Mg(2+). Requires thiamine diphosphate as cofactor.

It catalyses the reaction D-glyceraldehyde 3-phosphate + pyruvate + H(+) = 1-deoxy-D-xylulose 5-phosphate + CO2. It participates in metabolic intermediate biosynthesis; 1-deoxy-D-xylulose 5-phosphate biosynthesis; 1-deoxy-D-xylulose 5-phosphate from D-glyceraldehyde 3-phosphate and pyruvate: step 1/1. Catalyzes the acyloin condensation reaction between C atoms 2 and 3 of pyruvate and glyceraldehyde 3-phosphate to yield 1-deoxy-D-xylulose-5-phosphate (DXP). This is 1-deoxy-D-xylulose-5-phosphate synthase from Baumannia cicadellinicola subsp. Homalodisca coagulata.